The primary structure comprises 932 residues: UPF0182 protein Dred_1797 (932 aa).

7 helical membrane-spanning segments follow: residues 11-31, 53-73, 118-138, 180-200, 209-229, 264-284, and 292-312; these read LVIL…GLYI, IGLR…NLML, LTLA…SSVA, ILAS…LVTD, IFRF…FFVI, YKAL…NIFL, and YAIG…PAII. The disordered stretch occupies residues 861–883; the sequence is DRPQQGVPPATDQPAGQQPAPEK.

The protein belongs to the UPF0182 family.

It is found in the cell membrane. This is UPF0182 protein Dred_1797 from Desulforamulus reducens (strain ATCC BAA-1160 / DSM 100696 / MI-1) (Desulfotomaculum reducens).